Here is a 359-residue protein sequence, read N- to C-terminus: 3-dehydroshikimate dehydratase (359 aa).

This sequence belongs to the bacterial two-domain DSD family. As to quaternary structure, monomer.

The catalysed reaction is 3-dehydroshikimate = 3,4-dihydroxybenzoate + H2O. Its pathway is aromatic compound metabolism; 3,4-dihydroxybenzoate biosynthesis; 3,4-dihydroxybenzoate from 3-dehydroquinate: step 2/2. With respect to regulation, divalent cations such as Mg(2+), but also MO(2+), Mn(2+), Ba(2+), and Co(2+) activate the enzyme, whereas monovalent cations as K(+), Na(+), and NH4(+) decrease its activity slightly. Functionally, 3-dehydroshikimate dehydratase; part of the qa gene cluster that mediates the catabolism of quinic acid (QA) and as such, allows the use of QA as a sole carbon source. Catalyzes the third reaction in the inducible quinic acid catabolic pathway by converting dehydroshikimate to protocatechuate. The qa cluster encodes 3 inducible enymes (qa-2, qa-3 and qa-4) catalyzing the first three reactions in the catabolism of quinic acid to protocatechuic acid (also known as 3,4-Dihydroxybenzoic acid). The chain is 3-dehydroshikimate dehydratase from Neurospora crassa (strain ATCC 24698 / 74-OR23-1A / CBS 708.71 / DSM 1257 / FGSC 987).